Here is a 173-residue protein sequence, read N- to C-terminus: Co-chaperone protein HscB homolog (173 aa).

Positions 5–77 (CHFAQFDLQP…PRRALYLLTL (73 aa)) constitute a J domain.

Belongs to the HscB family. As to quaternary structure, interacts with HscA and stimulates its ATPase activity.

Functionally, co-chaperone involved in the maturation of iron-sulfur cluster-containing proteins. Seems to help targeting proteins to be folded toward HscA. The polypeptide is Co-chaperone protein HscB homolog (Pseudomonas aeruginosa (strain UCBPP-PA14)).